Consider the following 308-residue polypeptide: Ornithine carbamoyltransferase (308 aa).

Carbamoyl phosphate is bound by residues 56 to 59 (STRT), Gln83, Arg107, and 134 to 137 (HPCQ). L-ornithine-binding positions include Asn165, Asp225, and 229–230 (SM). Carbamoyl phosphate contacts are provided by residues 266 to 267 (CL) and Arg294.

Belongs to the aspartate/ornithine carbamoyltransferase superfamily. OTCase family.

Its subcellular location is the cytoplasm. The enzyme catalyses carbamoyl phosphate + L-ornithine = L-citrulline + phosphate + H(+). Its pathway is amino-acid biosynthesis; L-arginine biosynthesis; L-arginine from L-ornithine and carbamoyl phosphate: step 1/3. In terms of biological role, reversibly catalyzes the transfer of the carbamoyl group from carbamoyl phosphate (CP) to the N(epsilon) atom of ornithine (ORN) to produce L-citrulline. This is Ornithine carbamoyltransferase from Cereibacter sphaeroides (strain ATCC 17023 / DSM 158 / JCM 6121 / CCUG 31486 / LMG 2827 / NBRC 12203 / NCIMB 8253 / ATH 2.4.1.) (Rhodobacter sphaeroides).